A 270-amino-acid chain; its full sequence is Tetraspanin-18 (270 aa).

The Cytoplasmic segment spans residues 1–15 (MRRNCCHVSFASTLK). A helical membrane pass occupies residues 16 to 36 (ILNFVQAFIGVSIIIYSIWML). The Extracellular portion of the chain corresponds to 37 to 99 (HEYSRHLPVD…LRSLDLPAPW (63 aa)). Residues 100–120 (FIYSFMAVGILVCIVTFIGFI) traverse the membrane as a helical segment. The Cytoplasmic portion of the chain corresponds to 121 to 132 (AAEAINGCCLCF). The helical transmembrane segment at 133-153 (YSILKTLLILLEAALVAYIAI) threads the bilayer. At 154-183 (DRHWEKDLPYDPTGELSSLRAFIEENIDIC) the chain is on the extracellular side. A helical membrane pass occupies residues 184-204 (KWVGIAVVAVQLLSLLLAMVL). Residues 205–270 (RAMVSTPKPE…NQSPPVNPKG (66 aa)) are Cytoplasmic-facing. Positions 212–249 (KPELDEEEDDENPRSRTWDPLLGPQGNQAPAGSSKIEN) are disordered. A compositionally biased stretch (polar residues) spans 236-249 (QGNQAPAGSSKIEN). Ser245 carries the post-translational modification Phosphoserine.

This sequence belongs to the tetraspanin (TM4SF) family. In terms of assembly, homodimer. Constituent of tobamovirus replication complex. As to expression, expressed in rosette leaves.

The protein resides in the membrane. Its subcellular location is the vacuole membrane. May be involved in the regulation of cell differentiation. In terms of biological role, promotes intracellular multiplication of tobamoviruses, probably being a component of the replication complex. The polypeptide is Tetraspanin-18 (TOM2AH2) (Arabidopsis thaliana (Mouse-ear cress)).